Here is a 113-residue protein sequence, read N- to C-terminus: Iron-sulfur cluster insertion protein ErpA (113 aa).

Positions 41, 105, and 107 each coordinate iron-sulfur cluster.

Belongs to the HesB/IscA family. As to quaternary structure, homodimer. Requires iron-sulfur cluster as cofactor.

Functionally, required for insertion of 4Fe-4S clusters for at least IspG. The chain is Iron-sulfur cluster insertion protein ErpA from Actinobacillus pleuropneumoniae serotype 5b (strain L20).